We begin with the raw amino-acid sequence, 345 residues long: NADH-ubiquinone oxidoreductase chain 2 (345 aa).

The next 9 membrane-spanning stretches (helical) occupy residues 1–21 (MNPIINFILLSSMIAGTVLTM), 60–80 (FLIQAASSALMLFAGIINAHL), 110–130 (PIHFWLPEILQGVPMLTALII), 149–169 (IPTPMTLTMGFLSVIIGGLGG), 179–196 (MAFSSIAHLGWMIVIITI), 200–222 (LTLFNLVLYITFTSSTMLIMHLT), 240–260 (TANLFLLSLLSLGGLPPLSGF), 274–294 (NLVPLATTMAITTLFSLMFYL), and 323–343 (TTMLSMFSLATLFLLPITPTM).

This sequence belongs to the complex I subunit 2 family.

The protein resides in the mitochondrion inner membrane. It catalyses the reaction a ubiquinone + NADH + 5 H(+)(in) = a ubiquinol + NAD(+) + 4 H(+)(out). Its function is as follows. Core subunit of the mitochondrial membrane respiratory chain NADH dehydrogenase (Complex I) that is believed to belong to the minimal assembly required for catalysis. Complex I functions in the transfer of electrons from NADH to the respiratory chain. The immediate electron acceptor for the enzyme is believed to be ubiquinone. The polypeptide is NADH-ubiquinone oxidoreductase chain 2 (MT-ND2) (Varanus melinus (Quince monitor lizard)).